Consider the following 415-residue polypeptide: Ribulose bisphosphate carboxylase large chain (415 aa).

Positions 101 and 151 each coordinate substrate. The Proton acceptor role is filled by Lys-153. Lys-155 contributes to the substrate binding site. Mg(2+) is bound by residues Lys-179, Asp-181, and Glu-182. Lys-179 bears the N6-carboxylysine mark. The active-site Proton acceptor is His-272. 3 residues coordinate substrate: Arg-273, His-305, and Ser-357.

It belongs to the RuBisCO large chain family. Type I subfamily. As to quaternary structure, heterohexadecamer of 8 large chains and 8 small chains; disulfide-linked. The disulfide link is formed within the large subunit homodimers. Requires Mg(2+) as cofactor. The disulfide bond which can form in the large chain dimeric partners within the hexadecamer appears to be associated with oxidative stress and protein turnover.

The protein localises to the plastid. The protein resides in the chloroplast. It catalyses the reaction 2 (2R)-3-phosphoglycerate + 2 H(+) = D-ribulose 1,5-bisphosphate + CO2 + H2O. It carries out the reaction D-ribulose 1,5-bisphosphate + O2 = 2-phosphoglycolate + (2R)-3-phosphoglycerate + 2 H(+). Functionally, ruBisCO catalyzes two reactions: the carboxylation of D-ribulose 1,5-bisphosphate, the primary event in carbon dioxide fixation, as well as the oxidative fragmentation of the pentose substrate in the photorespiration process. Both reactions occur simultaneously and in competition at the same active site. The polypeptide is Ribulose bisphosphate carboxylase large chain (Cibotium barometz (Scythian lamb)).